A 56-amino-acid chain; its full sequence is Large ribosomal subunit protein bL33A (56 aa).

Belongs to the bacterial ribosomal protein bL33 family.

This chain is Large ribosomal subunit protein bL33A, found in Nocardia farcinica (strain IFM 10152).